Consider the following 38-residue polypeptide: Putative defensin-like protein 105 (38 aa).

3 cysteine pairs are disulfide-bonded: C5/C27, C13/C33, and C17/C34.

It belongs to the DEFL family.

The sequence is that of Putative defensin-like protein 105 from Arabidopsis thaliana (Mouse-ear cress).